Here is a 282-residue protein sequence, read N- to C-terminus: MNLFQAIILGIIQGLTEFLPISSSAHLRIVPALMGWGDPGAAFTAIIQIGTLAAVLIYFAKDIVSISGAVISGLVKGKPLGTDEARTGWMIAVGTIPIVVFGLTFKHEIETVLRSLYIVSASMIGLALVLVVAEKHTANRARDGRRGKSINELSWTDAIIIGLAQAMALIPGSSRSGVTITGGLFRNLDRETAARFSFLLSLPSVFAAGMLELYQTRQEIMSSTHNMLNLAVATIAAFIFGYLSIAFLLNYLKRHTTGIFIAYRLILGIGLIVMIGTGHLLP.

The next 8 membrane-spanning stretches (helical) occupy residues 1-21 (MNLFQAIILGIIQGLTEFLPI), 40-60 (GAAFTAIIQIGTLAAVLIYFA), 89-109 (WMIAVGTIPIVVFGLTFKHEI), 112-132 (VLRSLYIVSASMIGLALVLVV), 153-173 (LSWTDAIIIGLAQAMALIPGS), 196-216 (FSFLLSLPSVFAAGMLELYQT), 228-248 (LNLAVATIAAFIFGYLSIAFL), and 258-278 (GIFIAYRLILGIGLIVMIGTG).

The protein belongs to the UppP family.

The protein resides in the cell inner membrane. The catalysed reaction is di-trans,octa-cis-undecaprenyl diphosphate + H2O = di-trans,octa-cis-undecaprenyl phosphate + phosphate + H(+). Functionally, catalyzes the dephosphorylation of undecaprenyl diphosphate (UPP). Confers resistance to bacitracin. The polypeptide is Undecaprenyl-diphosphatase (Chlorobaculum tepidum (strain ATCC 49652 / DSM 12025 / NBRC 103806 / TLS) (Chlorobium tepidum)).